Here is a 546-residue protein sequence, read N- to C-terminus: Carboxypeptidase Y homolog A (546 aa).

Residues 1–17 form the signal peptide; it reads MKLLASTVLVGAAAASI. Positions 18 to 132 are excised as a propeptide; it reads TPQQQVLQNP…KLEQYNLRAK (115 aa). 5 cysteine pairs are disulfide-bonded: C186–C426, C320–C334, C344–C367, C351–C360, and C389–C396. An N-linked (GlcNAc...) asparagine glycan is attached at N217. S273 is a catalytic residue. D465 is a catalytic residue. N-linked (GlcNAc...) asparagine glycosylation occurs at N512. Residue H523 is part of the active site.

It belongs to the peptidase S10 family.

It localises to the vacuole. It catalyses the reaction Release of a C-terminal amino acid with broad specificity.. Vacuolar carboxypeptidase involved in degradation of small peptides. Digests preferentially peptides containing an aliphatic or hydrophobic residue in P1' position, as well as methionine, leucine or phenylalanine in P1 position of ester substrate. This chain is Carboxypeptidase Y homolog A (CPYA), found in Botryotinia fuckeliana (strain B05.10) (Noble rot fungus).